Reading from the N-terminus, the 113-residue chain is Mitochondrial import inner membrane translocase subunit PAM16 like 1 (113 aa).

A mitochondrion-targeting transit peptide spans 1–48 (MAARVLASVIVMGSGIIARACTQAYRQALANASKTGVAHEATQTIKRG). A J-like region spans residues 55 to 104 (EARQILGVTEKSSWDEILKKYDTLFERNAQNGSFYLQSKVHRAKECLETA).

This sequence belongs to the TIM16/PAM16 family. Expressed at low levels in seedlings, rosettes and inflorescence.

Its subcellular location is the mitochondrion inner membrane. In terms of biological role, regulates ATP-dependent protein translocation into the mitochondrial matrix. This chain is Mitochondrial import inner membrane translocase subunit PAM16 like 1, found in Arabidopsis thaliana (Mouse-ear cress).